The sequence spans 269 residues: 15-hydroxyprostaglandin dehydrogenase [NAD(+)] (269 aa).

Residues 12–20 (GAAQGIGKA), 36–37 (DW), 63–65 (CDV), and Asn91 contribute to the NAD(+) site. Positions 138 and 148 each coordinate substrate. Residue Tyr151 is the Proton acceptor of the active site. Residues 151-155 (YCASK) and 186-188 (VDT) contribute to the NAD(+) site.

It belongs to the short-chain dehydrogenases/reductases (SDR) family. Homodimer. Expressed in proximal convoluted tubules of the kidney, where it colocalizes with the prostaglandin transporter SLC22A22 (at protein level). Expressed in lung, intestine, stomach and liver.

Its subcellular location is the cytoplasm. The enzyme catalyses prostaglandin E2 + NAD(+) = 15-oxoprostaglandin E2 + NADH + H(+). It carries out the reaction (15S)-hydroxy-(5Z,8Z,11Z,13E)-eicosatetraenoate + NAD(+) = 15-oxo-(5Z,8Z,11Z,13E)-eicosatetraenoate + NADH + H(+). The catalysed reaction is (11R)-hydroxy-(5Z,8Z,12E,14Z)-eicosatetraenoate + NAD(+) = 11-oxo-(5Z,8Z,12E,14Z)-eicosatetraenoate + NADH + H(+). It catalyses the reaction lipoxin A4 + NAD(+) = 15-oxo-(5S,6R)-dihydroxy-(7E,9E,11Z,13E)-eicosatetraenoate + NADH + H(+). The enzyme catalyses 15-oxo-(5S,6R)-dihydroxy-(7E,9E,11Z)-eicosatrienoate + NADH + H(+) = (5S,6R,15S)-trihydroxy-(7E,9E,11Z)-eicosatrienoate + NAD(+). It carries out the reaction prostaglandin A1 + NAD(+) = 15-oxo-prostaglandin A1 + NADH + H(+). The catalysed reaction is prostaglandin E1 + NAD(+) = 15-oxoprostaglandin E1 + NADH + H(+). It catalyses the reaction 14-hydroxy-(4Z,7Z,10Z,12E,16Z,19Z)-docosahexaenoate + NAD(+) = 14-oxo-(4Z,7Z,10Z,12E,16Z,19Z)-docosahexaenoate + NADH + H(+). The enzyme catalyses resolvin E1 + NAD(+) = 18-oxo-resolvin E1 + NADH + H(+). It carries out the reaction resolvin D1 + NAD(+) = 8-oxoresolvin D1 + NADH + H(+). The catalysed reaction is resolvin D1 + NAD(+) = 17-oxoresolvin D1 + NADH + H(+). It catalyses the reaction resolvin D2 + NAD(+) = 7-oxoresolvin D2 + NADH + H(+). The enzyme catalyses resolvin D2 + NAD(+) = 16-oxoresolvin D2 + NADH + H(+). Catalyzes the NAD-dependent dehydrogenation (oxidation) of a broad array of hydroxylated polyunsaturated fatty acids (mainly eicosanoids and docosanoids, including prostaglandins, lipoxins and resolvins), yielding their corresponding keto (oxo) metabolites. Decreases the levels of the pro-proliferative prostaglandins such as prostaglandin E2 (whose activity is increased in cancer because of an increase in the expression of cyclooxygenase 2) and generates oxo-fatty acid products that can profoundly influence cell function by abrogating pro-inflammatory cytokine expression. Converts resolvins E1, D1 and D2 to their oxo products, which represents a mode of resolvin inactivation. Resolvin E1 plays important roles during the resolution phase of acute inflammation, while resolvins D1 and D2 have a unique role in obesity-induced adipose inflammation. This Mus musculus (Mouse) protein is 15-hydroxyprostaglandin dehydrogenase [NAD(+)] (Hpgd).